The sequence spans 436 residues: MFESKINPLWQSFILAVQEEVKPALGCTEPISLALAAAAAAAELDGTVERIDAWVSPNLMKNGMGVTVPGTGMVGLPIAAALGALGGDAKAGLEVLKDASAKAVADAKAMLAAGHVAVMLQEPCNDILFSRAKVYSGDSWACVTIVGDHTNIVRIETDKGVVFTQADNAQEEEKTSPLGVLSHTSLEEILAFVNAVPFDAIRFILDAARLNGALSQEGLRGSWGLHIGSTLVKQCDRGLLAKDLSTAILIRTSAASDARMGGATLPAMSNSGSGNQGITATVPVMVVAEHVGADDECLARALMLSHLSAIYIHHQLPRLSALCAATTAAMGAAAGMAWLIDGRYDTIAMAISSMIGDVSGMICDGASNSCAMKVSISASAAWKAVLMALDDTAVTGNEGIVAHNVEQSISNLCSLACRSMQQTDKQIIEIMASKAH.

Belongs to the UPF0597 family.

The polypeptide is UPF0597 protein YhaM (Salmonella paratyphi A (strain ATCC 9150 / SARB42)).